The sequence spans 291 residues: ATP synthase gamma chain (291 aa).

Belongs to the ATPase gamma chain family. In terms of assembly, F-type ATPases have 2 components, CF(1) - the catalytic core - and CF(0) - the membrane proton channel. CF(1) has five subunits: alpha(3), beta(3), gamma(1), delta(1), epsilon(1). CF(0) has three main subunits: a, b and c.

The protein resides in the cell inner membrane. In terms of biological role, produces ATP from ADP in the presence of a proton gradient across the membrane. The gamma chain is believed to be important in regulating ATPase activity and the flow of protons through the CF(0) complex. This Ruegeria pomeroyi (strain ATCC 700808 / DSM 15171 / DSS-3) (Silicibacter pomeroyi) protein is ATP synthase gamma chain.